Reading from the N-terminus, the 92-residue chain is Small ribosomal subunit protein uS19 (92 aa).

Belongs to the universal ribosomal protein uS19 family.

Functionally, protein S19 forms a complex with S13 that binds strongly to the 16S ribosomal RNA. The protein is Small ribosomal subunit protein uS19 of Corynebacterium urealyticum (strain ATCC 43042 / DSM 7109).